Consider the following 108-residue polypeptide: Cell cycle protein GpsB (108 aa).

Residues leucine 32–alanine 69 adopt a coiled-coil conformation.

The protein belongs to the GpsB family. Forms polymers through the coiled coil domains. Interacts with PBP1, MreC and EzrA.

Its subcellular location is the cytoplasm. Functionally, divisome component that associates with the complex late in its assembly, after the Z-ring is formed, and is dependent on DivIC and PBP2B for its recruitment to the divisome. Together with EzrA, is a key component of the system that regulates PBP1 localization during cell cycle progression. Its main role could be the removal of PBP1 from the cell pole after pole maturation is completed. Also contributes to the recruitment of PBP1 to the division complex. Not essential for septum formation. This chain is Cell cycle protein GpsB, found in Streptococcus pyogenes serotype M28 (strain MGAS6180).